A 286-amino-acid polypeptide reads, in one-letter code: 3-hydroxyanthranilate 3,4-dioxygenase (286 aa).

Residues 1–160 (MERRVRVKSW…SEQYRTGKPN (160 aa)) are domain A (catalytic). Arg43 lines the O2 pocket. Fe cation contacts are provided by His47, Glu53, and His91. Glu53 is a binding site for substrate. Residues Arg95 and Glu105 each coordinate substrate. Residues 161-177 (PDQLLKELPFPLNTRSI) form a linker region. The domain B stretch occupies residues 178 to 286 (MKPMSLKAWL…QDPARKKPWW (109 aa)).

It belongs to the 3-HAO family. As to quaternary structure, monomer. Requires Fe(2+) as cofactor.

The protein resides in the cytoplasm. It localises to the cytosol. The catalysed reaction is 3-hydroxyanthranilate + O2 = (2Z,4Z)-2-amino-3-carboxymuconate 6-semialdehyde. The protein operates within cofactor biosynthesis; NAD(+) biosynthesis; quinolinate from L-kynurenine: step 3/3. Functionally, catalyzes the oxidative ring opening of 3-hydroxyanthranilate to 2-amino-3-carboxymuconate semialdehyde, which spontaneously cyclizes to quinolinate. The protein is 3-hydroxyanthranilate 3,4-dioxygenase (Haao) of Mus musculus (Mouse).